Reading from the N-terminus, the 56-residue chain is Small ribosomal subunit protein uS14 (56 aa).

4 residues coordinate Zn(2+): Cys-21, Cys-24, Cys-39, and Cys-42.

This sequence belongs to the universal ribosomal protein uS14 family. Zinc-binding uS14 subfamily. Part of the 30S ribosomal subunit. The cofactor is Zn(2+).

Functionally, binds 16S rRNA, required for the assembly of 30S particles. The chain is Small ribosomal subunit protein uS14 from Thermococcus kodakarensis (strain ATCC BAA-918 / JCM 12380 / KOD1) (Pyrococcus kodakaraensis (strain KOD1)).